We begin with the raw amino-acid sequence, 111 residues long: UPF0122 protein CKR_1296 (111 aa).

This sequence belongs to the UPF0122 family.

In terms of biological role, might take part in the signal recognition particle (SRP) pathway. This is inferred from the conservation of its genetic proximity to ftsY/ffh. May be a regulatory protein. This is UPF0122 protein CKR_1296 from Clostridium kluyveri (strain NBRC 12016).